The sequence spans 50 residues: PhoP/PhoQ regulator MgrB (50 aa).

Residues M1–L4 are Cytoplasmic-facing. A helical transmembrane segment spans residues N5–L27. Over D28–W50 the chain is Periplasmic.

It belongs to the MgrB family. Probably interacts with the periplasmic domain of PhoQ.

It is found in the cell inner membrane. Its function is as follows. PhoP-regulated transcription is redox-sensitive, being activated when the periplasm becomes more reducing. MgrB acts between DsbA/DsbB and PhoP/PhoQ in this pathway. Represses PhoP/PhoQ signaling, possibly by binding to the periplasmic domain of PhoQ, altering its activity and that of downstream effector PhoP. This Yersinia pestis protein is PhoP/PhoQ regulator MgrB.